The chain runs to 376 residues: Cyclin-dependent kinase 9-A (376 aa).

The Protein kinase domain occupies 19–319 (YERLAKIGQG…SDDALNNDFF (301 aa)). ATP is bound by residues 25–33 (IGQGTFGEV) and K48. The active-site Proton acceptor is the D153. Residues 345-376 (PPRRRGGHMPQQPANQARNPAATNQSEFERVF) are disordered. A compositionally biased stretch (low complexity) spans 354 to 369 (PQQPANQARNPAATNQ).

This sequence belongs to the protein kinase superfamily. CMGC Ser/Thr protein kinase family. CDC2/CDKX subfamily. In terms of assembly, associates with cyclin-T to form P-TEFb.

Its subcellular location is the nucleus. The catalysed reaction is L-seryl-[protein] + ATP = O-phospho-L-seryl-[protein] + ADP + H(+). It carries out the reaction L-threonyl-[protein] + ATP = O-phospho-L-threonyl-[protein] + ADP + H(+). It catalyses the reaction [DNA-directed RNA polymerase] + ATP = phospho-[DNA-directed RNA polymerase] + ADP + H(+). Its function is as follows. Member of the cyclin-dependent kinase pair (CDK9/cyclin-T) complex, also called positive transcription elongation factor B (P-TEFb), which is proposed to facilitate the transition from abortive to production elongation by phosphorylating the CTD (C-terminal domain) of the large subunit of RNA polymerase II (RNAP II) and SUPT5H. The polypeptide is Cyclin-dependent kinase 9-A (cdk9-a) (Xenopus laevis (African clawed frog)).